A 337-amino-acid polypeptide reads, in one-letter code: AP2/ERF and B3 domain-containing transcription factor At1g50680 (337 aa).

The segment at residues 27–84 (KYKGVVQQQNGHWGAQIYADHKRIWLGTFKSADEAATAYDSASIKLRSFDANSHRNFP) is a DNA-binding region (AP2/ERF). Residues 157–271 (FQKELTPSDV…VKTLEGQRKN (115 aa)) constitute a DNA-binding region (TF-B3).

This sequence belongs to the AP2/ERF transcription factor family. RAV subfamily.

The protein resides in the nucleus. Its function is as follows. Probably acts as a transcriptional activator. Binds to the GCC-box pathogenesis-related promoter element. May be involved in the regulation of gene expression by stress factors and by components of stress signal transduction pathways. In Arabidopsis thaliana (Mouse-ear cress), this protein is AP2/ERF and B3 domain-containing transcription factor At1g50680.